The chain runs to 611 residues: RAC serine/threonine-protein kinase (611 aa).

Residues 14–25 are compositionally biased toward low complexity; the sequence is VVASAPAPGSAS. Disordered stretches follow at residues 14-33 and 45-88; these read VVAS…SPTT and QSTH…NTTF. S30 carries the phosphoserine modification. One can recognise a PH domain in the interval 106 to 211; the sequence is QVVKEGWLMK…WTEAIRNVSS (106 aa). The region spanning 266–523 is the Protein kinase domain; the sequence is FEFLKVLGKG…VKEIQAHPFF (258 aa). ATP is bound by residues 272–280 and K295; that span reads LGKGTFGKV. The Proton acceptor role is filled by D389. The AGC-kinase C-terminal domain occupies 524 to 597; the sequence is ASINWTDLVL…QGDMASTLGT (74 aa). S586 is subject to Phosphoserine.

The protein belongs to the protein kinase superfamily. AGC Ser/Thr protein kinase family. RAC subfamily. In terms of assembly, interacts with trbl. In terms of processing, phosphorylated and activated by Pk61C/PDK1. Phosphorylated on Ser-586 by the TORC2 complex. As to expression, ubiquitously expressed. Present in ovary, where it is concentrated at the basal side of follicle cells.

Its subcellular location is the cytoplasm. It localises to the cytosol. It is found in the cell membrane. It catalyses the reaction L-seryl-[protein] + ATP = O-phospho-L-seryl-[protein] + ADP + H(+). The enzyme catalyses L-threonyl-[protein] + ATP = O-phospho-L-threonyl-[protein] + ADP + H(+). Its function is as follows. Serine/threonine kinase involved in various developmental processes. During early embryogenesis, acts as a survival protein. During mid-embryogenesis, phosphorylates and activates trh, a transcription factor required for tracheal cell fate determination. Also regulates tracheal cell migration. Later in development, acts downstream of PI3K and Pk61C/PDK1 in the insulin receptor transduction pathway which regulates cell growth and organ size, by phosphorylating and antagonizing FOXO transcription factor. Controls follicle cell size during oogenesis. May also stimulate cell growth by phosphorylating Gig/Tsc2 and inactivating the Tsc complex. Dephosphorylation of 'Ser-586' by Phlpp triggers apoptosis and suppression of tumor growth. The chain is RAC serine/threonine-protein kinase from Drosophila melanogaster (Fruit fly).